The primary structure comprises 608 residues: MSDKSDLKAELERKKQRLAQIREEKKRKEEERKKKEADMQQKKEPVPDDSDLDRKRRETEALLQSIGISPEPPLVPTPMSPSSKSVSTPSEAGSQDSGDLGPLTRRRLHKLGVSKITQVDFLPREVVSYSKETQTPLATHQSEEDEDDEEMVEPKGDQDSEQENEDKKQEVKEAPPRELTEEEKQQILHSEEFLIFFDRTIRVIERALAEDSDIFFDYSGRELEEKDGDVQAGANLSFNRQFYDEHWSKHRVVTCMDWSLQYPELMVASYNNNEDAPHEPDGVALVWNMKFKKTTPEYVFHCQSSVMSVCFARFHPNLVVGGTYSGQIVLWDNRSHRRTPVQRTPLSAAAHTHPVYCVNVVGTQNAHNLITVSTDGKMCSWSLDMLSTPQESMELVYNKSKPVAVTGMAFPTGDVNNFVVGSEEGTVYTACRHGSKAGIGEVFEGHQGPVTGINCHMAVGPIDFSHLFVTSSFDWTVKLWTTKHNKPLYSFEDNADYVYDVMWSPVHPALFACVDGMGRLDLWNLNNDTEVPTASVAIEGASALNRVRWAQGGKEVAVGDSEGRIWIYDVGELAVPHNDEWTRFARTLVEIRANRADSEEEGAVELSA.

2 stretches are compositionally biased toward basic and acidic residues: residues Met1–Arg13 and Gln20–Glu60. Residues Met1 to Arg106 form a disordered region. Ser2 is modified (N-acetylserine). Phosphoserine is present on Ser50. Positions Pro70–Met79 are enriched in pro residues. A compositionally biased stretch (low complexity) spans Ser80–Ser90. The residue at position 83 (Ser83) is a Phosphoserine. Thr88 carries the post-translational modification Phosphothreonine. Residues Ser90, Ser94, and Ser97 each carry the phosphoserine modification. Residues Lys110–Val126 are interaction with DYNLT1. The interval Glu132–Lys184 is disordered. The residue at position 139 (Thr139) is a Phosphothreonine. Phosphoserine occurs at positions 142 and 160. Basic and acidic residues predominate over residues Glu165–Lys184. 7 WD repeats span residues Ser248–Glu297, His301–Val341, Ala350–Glu391, Ser400–Gly440, Gly445–Ser490, Asp493–Thr533, and Glu539–Asn578. Ser598 carries the phosphoserine modification.

It belongs to the dynein intermediate chain family. Homodimer. The cytoplasmic dynein 1 complex consists of two catalytic heavy chains (HCs) and a number of non-catalytic subunits presented by intermediate chains (ICs), light intermediate chains (LICs) and light chains (LCs); the composition seems to vary in respect to the IC, LIC and LC composition. The heavy chain homodimer serves as a scaffold for the probable homodimeric assembly of the respective non-catalytic subunits. The ICs and LICs bind directly to the HC dimer and the LCs assemble on the IC dimer. Interacts with DYNC1H1. Interacts with DYNLT1 and DYNLT3. Interacts with DCTN1. Interacts with MCRS1; the interaction is required for the proper distribution of centriolar satellites.

It localises to the cytoplasm. Its subcellular location is the chromosome. It is found in the centromere. The protein resides in the kinetochore. The protein localises to the cytoskeleton. It localises to the spindle pole. Its function is as follows. Acts as one of several non-catalytic accessory components of the cytoplasmic dynein 1 complex that are thought to be involved in linking dynein to cargos and to adapter proteins that regulate dynein function. Cytoplasmic dynein 1 acts as a motor for the intracellular retrograde motility of vesicles and organelles along microtubules. The intermediate chains mediate the binding of dynein to dynactin via its 150 kDa component (p150-glued) DCTN1. May play a role in mediating the interaction of cytoplasmic dynein with membranous organelles and kinetochores. This chain is Cytoplasmic dynein 1 intermediate chain 1 (DYNC1I1), found in Bos taurus (Bovine).